Here is a 76-residue protein sequence, read N- to C-terminus: Omega-conotoxin-like Ai6.3 (76 aa).

Positions 1 to 22 (MKLTCLMIVAVLFLTAWTFVTA) are cleaved as a signal peptide. A propeptide spanning residues 23–50 (VPDSSNALENLYLKAHHEMNNPEDSELN) is cleaved from the precursor. Disulfide bonds link Cys53-Cys67, Cys60-Cys71, and Cys66-Cys75.

This sequence belongs to the conotoxin O1 superfamily. As to expression, expressed by the venom duct.

The protein resides in the secreted. Functionally, omega-conotoxins act at presynaptic membranes, they bind and block voltage-gated calcium channels (Cav). The protein is Omega-conotoxin-like Ai6.3 of Conus ammiralis (Admiral cone).